Here is a 295-residue protein sequence, read N- to C-terminus: Ribosomal protein L11 methyltransferase (295 aa).

Threonine 146, glycine 167, aspartate 189, and asparagine 231 together coordinate S-adenosyl-L-methionine.

This sequence belongs to the methyltransferase superfamily. PrmA family.

It localises to the cytoplasm. The catalysed reaction is L-lysyl-[protein] + 3 S-adenosyl-L-methionine = N(6),N(6),N(6)-trimethyl-L-lysyl-[protein] + 3 S-adenosyl-L-homocysteine + 3 H(+). In terms of biological role, methylates ribosomal protein L11. The sequence is that of Ribosomal protein L11 methyltransferase from Vibrio cholerae serotype O1 (strain M66-2).